The primary structure comprises 260 residues: UPF0758 protein Smed_1459 (260 aa).

In terms of domain architecture, MPN spans 138 to 260 (VLSSWSAVID…HVSLKGLQLF (123 aa)). Zn(2+)-binding residues include His209, His211, and Asp222. The JAMM motif motif lies at 209–222 (HNHPSGDPTPSCAD).

Belongs to the UPF0758 family.

In Sinorhizobium medicae (strain WSM419) (Ensifer medicae), this protein is UPF0758 protein Smed_1459.